The following is a 153-amino-acid chain: Pheromone-binding protein Gp-9 (153 aa).

The N-terminal stretch at M1 to A19 is a signal peptide. 3 disulfides stabilise this stretch: C37-C77, C73-C129, and C118-C138.

The protein belongs to the PBP/GOBP family. As to quaternary structure, homodimer.

The protein resides in the secreted. Its function is as follows. Colony queen number, a major feature of social organization, is associated with worker genotype for Gp-9. Colonies are headed by either a single reproductive queen (monogyne form) or multiple queens (polygyne form). Differences in worker Gp-9 genotypes between social forms may cause differences in workers' abilities to recognize queens and regulate their numbers. This chain is Pheromone-binding protein Gp-9, found in Solenopsis invicta (Red imported fire ant).